Reading from the N-terminus, the 142-residue chain is Small ribosomal subunit protein uS9 (142 aa).

This sequence belongs to the universal ribosomal protein uS9 family.

In Debaryomyces hansenii (strain ATCC 36239 / CBS 767 / BCRC 21394 / JCM 1990 / NBRC 0083 / IGC 2968) (Yeast), this protein is Small ribosomal subunit protein uS9 (RPS16).